The chain runs to 436 residues: Gustatory receptor for sugar taste 61a (436 aa).

Topologically, residues 1 to 78 (MSRTSDDIRK…PQDVKFKVRS (78 aa)) are cytoplasmic. A helical transmembrane segment spans residues 79-99 (IGLAVTGLFLLLGGMKTLVGA). Topologically, residues 100 to 111 (NILFTEGLNAKN) are extracellular. The chain crosses the membrane as a helical span at residues 112–132 (IVGLVFLIVGMVNWLNFVGFA). Residues 133 to 164 (RSWSHIMLPWSSVDILMLFPPYKRGKRSLRSK) are Cytoplasmic-facing. Residues 165–185 (VNVLALSVVVLAVGDHMLYYA) traverse the membrane as a helical segment. Residues 186-214 (SGYCSYSMHILQCHTNHSRITFGLYLEKE) lie on the Extracellular side of the membrane. A glycan (N-linked (GlcNAc...) asparagine) is linked at Asn201. The helical transmembrane segment at 215-235 (FSDIMFIMPFNIFSMCYGFWL) threads the bilayer. The Cytoplasmic segment spans residues 236 to 237 (NG). The helical transmembrane segment at 238 to 258 (AFTFLWNFMDIFIVMTSIGLA) threads the bilayer. At 259–304 (QRFQQFAARVGALEGRHVPEALWYDIRRDHIRLCELASLVEASMSN) the chain is on the extracellular side. A helical transmembrane segment spans residues 305 to 325 (IVFVSCANNVYVICNQALAIF). Topologically, residues 326-334 (TKLRHPINY) are cytoplasmic. The chain crosses the membrane as a helical span at residues 335 to 355 (VYFWYSLIFLLARTSLVFMTA). The Extracellular segment spans residues 356-436 (SKIHDASLLP…AKSHKGLRCA (81 aa)).

The protein belongs to the insect chemoreceptor superfamily. Gustatory receptor (GR) family. Gr5a subfamily. In terms of tissue distribution, expressed in sweet sensing neurons of classical chemosensory sensilla, but also in two supersensitive neurons of atypical taste sensilla.

It is found in the cell membrane. Functionally, one of the few identified sugar gustatory receptors identified so far with glucose being its primary ligand and which mediates acceptance behavior. This Drosophila melanogaster (Fruit fly) protein is Gustatory receptor for sugar taste 61a (Gr61a).